Here is a 763-residue protein sequence, read N- to C-terminus: Polyribonucleotide nucleotidyltransferase (763 aa).

Mg(2+)-binding residues include aspartate 526 and aspartate 532. The KH domain maps to proline 592–isoleucine 651. Residues glycine 663–valine 732 form the S1 motif domain. The segment at serine 739–alanine 763 is disordered. Positions alanine 743–glutamate 752 are enriched in basic and acidic residues.

It belongs to the polyribonucleotide nucleotidyltransferase family. It depends on Mg(2+) as a cofactor.

It localises to the cytoplasm. It carries out the reaction RNA(n+1) + phosphate = RNA(n) + a ribonucleoside 5'-diphosphate. Functionally, involved in mRNA degradation. Catalyzes the phosphorolysis of single-stranded polyribonucleotides processively in the 3'- to 5'-direction. This Mycolicibacterium smegmatis (strain ATCC 700084 / mc(2)155) (Mycobacterium smegmatis) protein is Polyribonucleotide nucleotidyltransferase.